A 494-amino-acid chain; its full sequence is uncharacterized protein (494 aa).

This is an uncharacterized protein from Magallana gigas (Pacific oyster).